Consider the following 226-residue polypeptide: Large ribosomal subunit protein uL1 (226 aa).

The protein belongs to the universal ribosomal protein uL1 family. As to quaternary structure, part of the 50S ribosomal subunit.

Binds directly to 23S rRNA. The L1 stalk is quite mobile in the ribosome, and is involved in E site tRNA release. In terms of biological role, protein L1 is also a translational repressor protein, it controls the translation of the L11 operon by binding to its mRNA. The sequence is that of Large ribosomal subunit protein uL1 from Mycoplasma pneumoniae (strain ATCC 29342 / M129 / Subtype 1) (Mycoplasmoides pneumoniae).